The sequence spans 492 residues: Cysteine--tRNA ligase (492 aa).

Cys27 contributes to the Zn(2+) binding site. The 'HIGH' region motif lies at 29–39 (VTVYDLCHLGH). Residues Cys211, His236, and Glu240 each coordinate Zn(2+). The 'KMSKS' region signature appears at 268-272 (KMSKS). Lys271 contributes to the ATP binding site.

Belongs to the class-I aminoacyl-tRNA synthetase family. As to quaternary structure, monomer. Zn(2+) is required as a cofactor.

Its subcellular location is the cytoplasm. It catalyses the reaction tRNA(Cys) + L-cysteine + ATP = L-cysteinyl-tRNA(Cys) + AMP + diphosphate. This chain is Cysteine--tRNA ligase, found in Prochlorococcus marinus (strain MIT 9515).